Here is a 455-residue protein sequence, read N- to C-terminus: Kynurenine--oxoglutarate transaminase 3 (455 aa).

Residue G72 participates in substrate binding. K117 carries the post-translational modification N6-acetyllysine; alternate. K117 bears the N6-succinyllysine; alternate mark. N219 contributes to the substrate binding site. K281 carries the post-translational modification N6-(pyridoxal phosphate)lysine. R430 is a substrate binding site.

The protein belongs to the class-I pyridoxal-phosphate-dependent aminotransferase family. As to quaternary structure, homodimer. It depends on pyridoxal 5'-phosphate as a cofactor. As to expression, widely expressed, with higher expression levels in liver, kidney, heart and neuroendocrine tissues.

It carries out the reaction L-kynurenine + 2-oxoglutarate = kynurenate + L-glutamate + H2O. The catalysed reaction is L-kynurenine + glyoxylate = kynurenate + glycine + H2O. The enzyme catalyses 3-hydroxy-L-kynurenine + glyoxylate = xanthurenate + glycine + H2O. It catalyses the reaction an S-substituted L-cysteine + H2O = a thiol + pyruvate + NH4(+). The protein operates within amino-acid degradation; L-kynurenine degradation; kynurenate from L-kynurenine: step 1/2. With respect to regulation, kynurenine transamination is competitively inhibited by cysteine, glutamine, histidine, methionine, leucine, or phenylalanine. Its function is as follows. Catalyzes the irreversible transamination of the L-tryptophan metabolite L-kynurenine to form kynurenic acid (KA), an intermediate in the tryptophan catabolic pathway which is also a broad spectrum antagonist of the three ionotropic excitatory amino acid receptors among others. May catalyze the beta-elimination of S-conjugates and Se-conjugates of L-(seleno)cysteine, resulting in the cleavage of the C-S or C-Se bond. Has transaminase activity towards L-kynurenine, tryptophan, phenylalanine, serine, cysteine, methionine, histidine, glutamine and asparagine with glyoxylate as an amino group acceptor (in vitro). Has lower activity with 2-oxoglutarate as amino group acceptor (in vitro). This is Kynurenine--oxoglutarate transaminase 3 (Kyat3) from Mus musculus (Mouse).